A 230-amino-acid chain; its full sequence is Large ribosomal subunit protein uL1c (230 aa).

The protein belongs to the universal ribosomal protein uL1 family. Part of the 50S ribosomal subunit.

It localises to the plastid. The protein resides in the chloroplast. Its function is as follows. Binds directly to 23S rRNA. Might be involved in E site tRNA release (Potential). This is Large ribosomal subunit protein uL1c (rpl1) from Trieres chinensis (Marine centric diatom).